We begin with the raw amino-acid sequence, 412 residues long: WW domain-containing oxidoreductase (412 aa).

The interval M1 to E24 is disordered. Positions D16–T49 constitute a WW 1 domain. Positions G50–C55 match the Nuclear localization signal motif. The 34-residue stretch at G57–Q90 folds into the WW 2 domain. G128–G134 is a binding site for NADP(+). Substrate is bound at residue S257. Residue Y290 is the Proton acceptor of the active site.

It belongs to the short-chain dehydrogenases/reductases (SDR) family.

Its subcellular location is the cytoplasm. It localises to the mitochondrion. It is found in the golgi apparatus. The protein resides in the lysosome. Its function is as follows. Putative oxidoreductase. Acts as a tumor suppressor and plays a role in apoptosis. May function synergistically with p53/TP53 to control genotoxic stress-induced cell death. Plays a role in TGFB1 signaling and TGFB1-mediated cell death. May also play a role in tumor necrosis factor (TNF)-mediated cell death. Required for normal bone development. Inhibits Wnt signaling. This is WW domain-containing oxidoreductase (wwox) from Danio rerio (Zebrafish).